Here is a 502-residue protein sequence, read N- to C-terminus: Probable glycerol kinase (502 aa).

Threonine 11 serves as a coordination point for substrate. Arginine 15 serves as a coordination point for ATP. The substrate site is built by arginine 85, tyrosine 140, and aspartate 246. ATP contacts are provided by residues threonine 268, glycine 313, and 416–420; that span reads GMIAN.

The protein belongs to the FGGY kinase family.

It catalyses the reaction glycerol + ATP = sn-glycerol 3-phosphate + ADP + H(+). The protein operates within polyol metabolism; glycerol degradation via glycerol kinase pathway; sn-glycerol 3-phosphate from glycerol: step 1/1. This is Probable glycerol kinase from Caenorhabditis elegans.